The sequence spans 347 residues: Core-capsid bridging protein (347 aa).

A disordered region spans residues Gly-290–Leu-320. Over residues Ser-304–Ala-318 the composition is skewed to basic residues.

It belongs to the adenoviridae core-capsid bridging protein family. In terms of assembly, monomer. Homodimer. Exists in equilibrium between monomers and dimers in solution. Interacts with the histone-like nucleoprotein; this interactions bridge the virus core to the capsid. Interacts with core protein X; this interactions bridge the virus core to the capsid. Interacts with the endosome lysis protein VI; this interactions bridge the virus core to the capsid. Interacts with the peripentonal hexons. Interacts with host NPM1; this interaction might play a role in virus assembly.

Its subcellular location is the virion. It is found in the host nucleus. The protein localises to the host nucleolus. Functionally, associates loosely with the viral DNA to form an outer shell around the nucleoprotein-DNA complex and links it with the capsid by binding the endosome lysis protein. Dissociates from the viral genome during entry. Might be involved in nuclear capsid assembly of the viral particles through its association with NPM1/nucleophosmin. The protein is Core-capsid bridging protein of Homo sapiens (Human).